The chain runs to 784 residues: Replication protein A 70 kDa DNA-binding subunit E (784 aa).

Positions 114 to 224 (HPVPGGKHND…NRGPVARNEA (111 aa)) are disordered. Polar residues-rich tracts occupy residues 132 to 148 (KFNT…QVNN) and 167 to 190 (SSVP…NGVT). A DNA-binding region (OB) is located at residues 241-327 (WTIKARVTNK…RNDYEIMLDN (87 aa)). The segment at 532–558 (CPIMNGDRPCSKKVTDNGDGTWRCEKC) adopts a C4-type zinc-finger fold. 2 disordered regions span residues 678–707 (LPIN…PSSV) and 746–784 (AKCP…VGSY). Polar residues predominate over residues 695–707 (GIGSSGTRDPSSV). Over residues 760–776 (YMGGSYRGTTGSYGGGL) the composition is skewed to gly residues.

It belongs to the replication factor A protein 1 family. In terms of assembly, heterotrimer of RPA1, RPA2 and RPA3 (canonical replication protein A complex).

It is found in the nucleus. In terms of biological role, component of the replication protein A complex (RPA) required for DNA recombination, repair and replication. The activity of RPA is mediated by single-stranded DNA binding and protein interactions. Probably involved in repair of double-strand DNA breaks (DSBs) induced by genotoxic stresses. This is Replication protein A 70 kDa DNA-binding subunit E (RPA1E) from Arabidopsis thaliana (Mouse-ear cress).